The primary structure comprises 389 residues: Protein DDI1 homolog 1 (389 aa).

Positions 109–132 (SSSSAQSAQRTRRVEQDDEGEKSM) are disordered. Aspartate 261 is an active-site residue.

The protein belongs to the DDI1 family. In terms of tissue distribution, expressed in most tissues.

Its subcellular location is the cytoplasm. The protein localises to the nucleus. Aspartic protease. Required for the cleavage and activation of transcription factors such as isoform a of the transcription factor skn-1, which in turn regulates the expression of proteasomal subunits such as rpt-3. Plays a key role in the degradation of the potassium channel slo-1, perhaps acting directly, in cleaving slo-1 upstream of the ER-associated degradation pathway (ERAD), and also indirectly, via activation of the transcription factor skn-1, which mediates proteasomal homeostasis. In Caenorhabditis elegans, this protein is Protein DDI1 homolog 1.